Reading from the N-terminus, the 273-residue chain is Ribosomal RNA small subunit methyltransferase A (273 aa).

Residues Asn18, Leu20, Gly45, Glu66, Asp91, and Asn113 each coordinate S-adenosyl-L-methionine.

It belongs to the class I-like SAM-binding methyltransferase superfamily. rRNA adenine N(6)-methyltransferase family. RsmA subfamily.

The protein localises to the cytoplasm. The enzyme catalyses adenosine(1518)/adenosine(1519) in 16S rRNA + 4 S-adenosyl-L-methionine = N(6)-dimethyladenosine(1518)/N(6)-dimethyladenosine(1519) in 16S rRNA + 4 S-adenosyl-L-homocysteine + 4 H(+). Functionally, specifically dimethylates two adjacent adenosines (A1518 and A1519) in the loop of a conserved hairpin near the 3'-end of 16S rRNA in the 30S particle. May play a critical role in biogenesis of 30S subunits. The protein is Ribosomal RNA small subunit methyltransferase A of Klebsiella pneumoniae (strain 342).